Reading from the N-terminus, the 252-residue chain is MERVLIVNADDFGLSKGQNYGIVEAYRNGVVTSTTALVNGEAIDHAAQLSRELPALGVGMHFVLTLGKPVSEMPGLTRDGLLGKWIWQMAEEDTLPLDEIAHELACQYQRFIDVFGREPTHLDSHHHVHMFPQIFPIVAHFAAQRGIALRIDRQTVLNADDLPSDLRSTQGFSSEFYGEEITEACFLRILDASAHRGEASLEVMCHPAFVDNIIRQSAYCYPRLTELEVLTSASLKAAIAERGYRPGSFLDI.

Histidine 61 and histidine 125 together coordinate Mg(2+).

It belongs to the YdjC deacetylase family. ChbG subfamily. Homodimer. The cofactor is Mg(2+).

The protein localises to the cytoplasm. It catalyses the reaction N,N'-diacetylchitobiose + H2O = N-acetyl-beta-D-glucosaminyl-(1-&gt;4)-D-glucosamine + acetate. The enzyme catalyses diacetylchitobiose-6'-phosphate + H2O = N'-monoacetylchitobiose-6'-phosphate + acetate. Its pathway is glycan degradation; chitin degradation. Involved in the degradation of chitin. ChbG is essential for growth on the acetylated chitooligosaccharides chitobiose and chitotriose but is dispensable for growth on cellobiose and chitosan dimer, the deacetylated form of chitobiose. Deacetylation of chitobiose-6-P and chitotriose-6-P is necessary for both the activation of the chb promoter by the regulatory protein ChbR and the hydrolysis of phosphorylated beta-glucosides by the phospho-beta-glucosidase ChbF. Catalyzes the removal of only one acetyl group from chitobiose-6-P to yield monoacetylchitobiose-6-P, the inducer of ChbR and the substrate of ChbF. The polypeptide is Chitooligosaccharide deacetylase (Salmonella dublin (strain CT_02021853)).